Reading from the N-terminus, the 493-residue chain is MTTVRTRIAPSPTGDPHVGTAYIALFNLCFARQHGGQFILRIEDTDQLRSTRESEQQIYDALRWLGIEWDEGPDVGGPHGPYRQSERGEIYKKYSDELVAKGHAFPCFCSAERLDQVRAEQMANKETPRYDGHCMHLDPAEAERRITAGESHVIRMKVPSEGVCQVQDMLRGTVEIGWDRMDMQVLMKADGLPTYFLANVVDDHLMGITHVLRGEEWLPSAPKLIKLYEYFGWEQPQLCYMPLLRNPDKSKLSKRKNPTSVTFYERMGFLPQAMLNYLGRMGWSMPDEREKFTLEEMIEHFDIQRVSLGGPIFDLEKLSWLNGQWLRELPVEQFAAEVRKWAFNPEYMMKIAPHVQQRVETFSQIAPLAGFFFSGPLQLDPALFAHKKLDATQVRQVMQLILWKLEALRQWEKERITACITQVAEHLGFKLRDVMPLMFAAITGQASSVSVLDAMEILGPDLTRFRLRNALELLGGASKKEAKEWEKLLASLG.

A 'HIGH' region motif is present at residues 10 to 20; that stretch reads PSPTGDPHVGT. 4 residues coordinate Zn(2+): C107, C109, C134, and H136. The short motif at 251–255 is the 'KMSKS' region element; it reads KLSKR. Residue K254 coordinates ATP.

The protein belongs to the class-I aminoacyl-tRNA synthetase family. Glutamate--tRNA ligase type 1 subfamily. Monomer. Zn(2+) serves as cofactor.

It is found in the cytoplasm. The enzyme catalyses tRNA(Glu) + L-glutamate + ATP = L-glutamyl-tRNA(Glu) + AMP + diphosphate. In terms of biological role, catalyzes the attachment of glutamate to tRNA(Glu) in a two-step reaction: glutamate is first activated by ATP to form Glu-AMP and then transferred to the acceptor end of tRNA(Glu). In Stutzerimonas stutzeri (strain A1501) (Pseudomonas stutzeri), this protein is Glutamate--tRNA ligase.